A 348-amino-acid polypeptide reads, in one-letter code: Dihydroorotase (348 aa).

The Zn(2+) site is built by H14 and H16. Residues 16 to 18 and N42 contribute to the substrate site; that span reads HLR. The Zn(2+) site is built by K100, H137, and H175. At K100 the chain carries N6-carboxylysine. H137 serves as a coordination point for substrate. Residue L220 participates in substrate binding. Zn(2+) is bound at residue D248. The active site involves D248. Positions 252 and 264 each coordinate substrate.

The protein belongs to the metallo-dependent hydrolases superfamily. DHOase family. Class II DHOase subfamily. As to quaternary structure, homodimer. Zn(2+) serves as cofactor.

It carries out the reaction (S)-dihydroorotate + H2O = N-carbamoyl-L-aspartate + H(+). The protein operates within pyrimidine metabolism; UMP biosynthesis via de novo pathway; (S)-dihydroorotate from bicarbonate: step 3/3. In terms of biological role, catalyzes the reversible cyclization of carbamoyl aspartate to dihydroorotate. The protein is Dihydroorotase of Pseudomonas putida (strain ATCC 700007 / DSM 6899 / JCM 31910 / BCRC 17059 / LMG 24140 / F1).